The chain runs to 221 residues: Enolase-phosphatase E1 (221 aa).

Mg(2+) contacts are provided by Asp9 and Glu11. Residues 116–117 (SS) and Lys152 contribute to the substrate site. Asp180 is a binding site for Mg(2+).

It belongs to the HAD-like hydrolase superfamily. MasA/MtnC family. Monomer. Mg(2+) serves as cofactor.

It is found in the cytoplasm. The protein resides in the nucleus. The enzyme catalyses 5-methylsulfanyl-2,3-dioxopentyl phosphate + H2O = 1,2-dihydroxy-5-(methylsulfanyl)pent-1-en-3-one + phosphate. It participates in amino-acid biosynthesis; L-methionine biosynthesis via salvage pathway; L-methionine from S-methyl-5-thio-alpha-D-ribose 1-phosphate: step 3/6. The protein operates within amino-acid biosynthesis; L-methionine biosynthesis via salvage pathway; L-methionine from S-methyl-5-thio-alpha-D-ribose 1-phosphate: step 4/6. Functionally, bifunctional enzyme that catalyzes the enolization of 2,3-diketo-5-methylthiopentyl-1-phosphate (DK-MTP-1-P) into the intermediate 2-hydroxy-3-keto-5-methylthiopentenyl-1-phosphate (HK-MTPenyl-1-P), which is then dephosphorylated to form the acireductone 1,2-dihydroxy-3-keto-5-methylthiopentene (DHK-MTPene). This chain is Enolase-phosphatase E1, found in Kluyveromyces lactis (strain ATCC 8585 / CBS 2359 / DSM 70799 / NBRC 1267 / NRRL Y-1140 / WM37) (Yeast).